Reading from the N-terminus, the 180-residue chain is ATP synthase subunit delta (180 aa).

This sequence belongs to the ATPase delta chain family. As to quaternary structure, F-type ATPases have 2 components, F(1) - the catalytic core - and F(0) - the membrane proton channel. F(1) has five subunits: alpha(3), beta(3), gamma(1), delta(1), epsilon(1). F(0) has three main subunits: a(1), b(2) and c(10-14). The alpha and beta chains form an alternating ring which encloses part of the gamma chain. F(1) is attached to F(0) by a central stalk formed by the gamma and epsilon chains, while a peripheral stalk is formed by the delta and b chains.

The protein localises to the cell membrane. Functionally, f(1)F(0) ATP synthase produces ATP from ADP in the presence of a proton or sodium gradient. F-type ATPases consist of two structural domains, F(1) containing the extramembraneous catalytic core and F(0) containing the membrane proton channel, linked together by a central stalk and a peripheral stalk. During catalysis, ATP synthesis in the catalytic domain of F(1) is coupled via a rotary mechanism of the central stalk subunits to proton translocation. In terms of biological role, this protein is part of the stalk that links CF(0) to CF(1). It either transmits conformational changes from CF(0) to CF(1) or is implicated in proton conduction. In Caldicellulosiruptor bescii (strain ATCC BAA-1888 / DSM 6725 / KCTC 15123 / Z-1320) (Anaerocellum thermophilum), this protein is ATP synthase subunit delta.